Consider the following 544-residue polypeptide: Chaperonin GroEL (544 aa).

Residues 29–32, lysine 50, 86–90, glycine 413, 479–481, and aspartate 495 each bind ATP; these read TLGP, DGTTT, and DAA.

It belongs to the chaperonin (HSP60) family. In terms of assembly, forms a cylinder of 14 subunits composed of two heptameric rings stacked back-to-back. Interacts with the co-chaperonin GroES.

The protein localises to the cytoplasm. The enzyme catalyses ATP + H2O + a folded polypeptide = ADP + phosphate + an unfolded polypeptide.. In terms of biological role, together with its co-chaperonin GroES, plays an essential role in assisting protein folding. The GroEL-GroES system forms a nano-cage that allows encapsulation of the non-native substrate proteins and provides a physical environment optimized to promote and accelerate protein folding. The polypeptide is Chaperonin GroEL (Borrelia duttonii (strain Ly)).